A 367-amino-acid chain; its full sequence is MKTSHLIRITLPGALAAALLASQVSQAADLVPPPGYYAAVGERKGSAGSCPSVPPPYTGSLVFTSKYEGSDSARATLNAKAEKAFRSQIKDITDMERGATKLVTQYMRSGRDGDLVCALNWMSAWARAGALQSDDFNHTGKSMRKWALGSLSGAYMRLKFSSSRPLSAHAGQSREIEDWFARLGTQVVRDWSNLPLKKINNHSYWAAWSVMSTAVVTNRRDLFDWAVSEFKVAANQVDEQGFLPNELKRRQRALAYHNYALPPLAMIAAFAQVNGVDLRQENHGALQRLAERVMNGVDDEETFEEKTGEDQDMTDLKVDNKYAWLEPYCALYRCAPKMLEAKKDREPFNSFRLGGEVTRVFSREGGS.

A signal peptide spans 1–27 (MKTSHLIRITLPGALAAALLASQVSQA). Substrate is bound by residues 65 to 66 (SK), 138 to 139 (HT), and tyrosine 256.

It belongs to the polysaccharide lyase 5 family.

Its subcellular location is the periplasm. The enzyme catalyses Eliminative cleavage of alginate to give oligosaccharides with 4-deoxy-alpha-L-erythro-hex-4-enuronosyl groups at their non-reducing ends and beta-D-mannuronate at their reducing end.. Its function is as follows. Catalyzes the depolymerization of alginate by cleaving the beta-1,4 glycosidic bond between two adjacent sugar residues via a beta-elimination mechanism. May serve to degrade mislocalized alginate that is trapped in the periplasmic space. The sequence is that of Alginate lyase from Pseudomonas paraeruginosa (strain DSM 24068 / PA7) (Pseudomonas aeruginosa (strain PA7)).